We begin with the raw amino-acid sequence, 98 residues long: Large ribosomal subunit protein uL23 (98 aa).

This sequence belongs to the universal ribosomal protein uL23 family. As to quaternary structure, part of the 50S ribosomal subunit. Contacts protein L29, and trigger factor when it is bound to the ribosome.

Its function is as follows. One of the early assembly proteins it binds 23S rRNA. One of the proteins that surrounds the polypeptide exit tunnel on the outside of the ribosome. Forms the main docking site for trigger factor binding to the ribosome. The sequence is that of Large ribosomal subunit protein uL23 from Rickettsia peacockii (strain Rustic).